Here is a 269-residue protein sequence, read N- to C-terminus: MGQNDLMGTAEDFADQFLRVTKQYLPHVARLCLISTFLEDGIRMWFQWSEQRDYIDTTWNCGYLLASSFVFLNLLGQLTGCVLVLSRNFVQYACFGLFGIIALQTIAYSILWDLKFLMRNLALGGGLLLLLAESRSEGKSMFAGVPTMRESSPKQYMQLGGRVLLVLMFMTLLHFDASFFSIVQNIVGTALMILVAIGFKTKLAALTLVVWLFAINVYFNAFWTIPVYKPMHDFLKYDFFQTMSVIGGLLLVVALGPGGVSMDEKKKEW.

Helical transmembrane passes span 64-84 (LLAS…CVLV), 92-112 (YACF…SILW), 179-199 (FFSI…AIGF), 203-223 (LAAL…NAFW), and 239-259 (FFQT…GPGG). The Di-lysine motif motif lies at 266–269 (KKEW).

Belongs to the SURF4 family. Found in a complex composed at least of SURF4, TMED2 and TMED10. May interact with LMAN1. Interacts with ZFYVE27 and with KIF5A in a ZFYVE27-dependent manner. Interacts with STING1. Interacts with SAR1B. Interacts with TMEM41B.

The protein resides in the endoplasmic reticulum membrane. It localises to the endoplasmic reticulum-Golgi intermediate compartment membrane. Its subcellular location is the golgi apparatus membrane. Functionally, endoplasmic reticulum cargo receptor that mediates the export of lipoproteins by recruiting cargos into COPII vesicles to facilitate their secretion. Acts as a cargo receptor for lipoproteins bearing both APOB and APOA1, thereby regulating lipoprotein delivery and the maintenance of lipid homeostasis. Synergizes with the GTPase SAR1B to mediate transport of circulating lipoproteins. Promotes the secretion of PCSK9. Also mediates the efficient secretion of erythropoietin (EPO). May also play a role in the maintenance of the architecture of the endoplasmic reticulum-Golgi intermediate compartment and of the Golgi. This is Surfeit locus protein 4 from Homo sapiens (Human).